We begin with the raw amino-acid sequence, 345 residues long: N-acetyl-gamma-glutamyl-phosphate reductase (345 aa).

The active site involves cysteine 149.

The protein belongs to the NAGSA dehydrogenase family. Type 1 subfamily.

It localises to the cytoplasm. The enzyme catalyses N-acetyl-L-glutamate 5-semialdehyde + phosphate + NADP(+) = N-acetyl-L-glutamyl 5-phosphate + NADPH + H(+). The protein operates within amino-acid biosynthesis; L-arginine biosynthesis; N(2)-acetyl-L-ornithine from L-glutamate: step 3/4. Functionally, catalyzes the NADPH-dependent reduction of N-acetyl-5-glutamyl phosphate to yield N-acetyl-L-glutamate 5-semialdehyde. The polypeptide is N-acetyl-gamma-glutamyl-phosphate reductase (Bacillus cereus (strain B4264)).